Reading from the N-terminus, the 517-residue chain is MAGPVPTLGLLAALVVCGSWGLNEEQRLIQHLFEEKGYNKELRPVARKEDIVDVALSLTLSNLISLKEVEETLTTNVWIDHAWIDSRLQWNANEFGNITVLRLPSDMVWLPEIVLENNNDGSFQISYACNVLVSDSGHVTWLPPAIFRSSCPISVTYFPFDWQNCSLKFSSLKYTAKEIRLSLKQEEEDNRSYPIEWIIIDPEGFTENGEWEIVHRAAKVNVDPSVPMDSTNHQDVTFYLIIRRKPLFYIINILVPCVLISFMINLVFYLPGDCGEKTSVAISVLLAQSVFLLLISKRLPATSMAIPLVGKFLLFGMVLVTMVVVICVIVLNIHFRTPSTHVLSEGVKKFFLETLPKLLHMSRPEEEDPGPRALIRRTSSLGYISKAEEYFSLKSRSDLMFEKQSERHGLARRLTTARKPPASSEQVQQELFNEMKPAVDGANFIVNHMRDQNSYNEEKDNWNQVARTVDRLCLFVVTPVMVVGTAWIFLQGVYNQPPPQPFPGDPFSYDEQDRRFI.

Residues 1–21 (MAGPVPTLGLLAALVVCGSWG) form the signal peptide. Residues 22–245 (LNEEQRLIQH…VTFYLIIRRK (224 aa)) lie on the Extracellular side of the membrane. N-linked (GlcNAc...) asparagine glycans are attached at residues asparagine 97, asparagine 164, and asparagine 190. A disulfide bridge links cysteine 151 with cysteine 165. Helical transmembrane passes span 246–270 (PLFY…VFYL), 278–296 (TSVA…LLIS), and 312–333 (FLLF…VLNI). Residues 334-471 (HFRTPSTHVL…WNQVARTVDR (138 aa)) are Cytoplasmic-facing. Phosphotyrosine; by Tyr-kinases is present on tyrosine 390. Residues 472 to 490 (LCLFVVTPVMVVGTAWIFL) traverse the membrane as a helical segment.

This sequence belongs to the ligand-gated ion channel (TC 1.A.9) family. Acetylcholine receptor (TC 1.A.9.1) subfamily. Delta/CHRND sub-subfamily. In terms of assembly, pentamer of two alpha chains, and one each of the beta, delta, and gamma (in immature muscle) or epsilon (in mature muscle) chains. The muscle heteropentamer composed of alpha-1, beta-1, delta, epsilon subunits interacts with the alpha-conotoxin ImII.

The protein resides in the postsynaptic cell membrane. It is found in the cell membrane. The enzyme catalyses K(+)(in) = K(+)(out). The catalysed reaction is Na(+)(in) = Na(+)(out). After binding acetylcholine, the AChR responds by an extensive change in conformation that affects all subunits and leads to opening of an ion-conducting channel across the plasma membrane. In Rattus norvegicus (Rat), this protein is Acetylcholine receptor subunit delta (Chrnd).